A 1562-amino-acid polypeptide reads, in one-letter code: Cell surface antigen I/II (1562 aa).

Positions 1–38 are cleaved as a signal peptide; that stretch reads MKVKKTYGFRKSKISKTLCGAVLGTVAAVSVAGQKVFA. The segment covering 42–54 has biased composition (low complexity); it reads TTTSDVDTKVVGT. Residues 42–91 form a disordered region; sequence TTTSDVDTKVVGTQTGNPATNLPEAQGSASKEAEQSQNQAGETNGSIPVE. The helical stretch occupies residues 60-551; it reads ATNLPEAQGS…SKAKYDQKIL (492 aa). A compositionally biased stretch (polar residues) spans 76–87; that stretch reads QSQNQAGETNGS. Ag I/II A repeat units follow at residues 147 to 221, 222 to 303, 304 to 385, and 386 to 467; these read KKTT…QKTN, AANQ…QEAN, AANE…KKAN, and AANE…QKDL. Disordered regions lie at residues 824–973 and 1482–1509; these read VPKV…PTDP and SNTV…RTST. Pro residues predominate over residues 943 to 958; it reads PTPPTPTPDQPEPNKP. Positions 1500–1509 are enriched in low complexity; it reads QDPSSPRTST. The short motif at 1529 to 1533 is the LPXTG sorting signal element; sequence LPNTG. Thr1532 is modified (pentaglycyl murein peptidoglycan amidated threonine). The propeptide at 1533-1562 is removed by sortase; sequence GVTNNAYMPLLGIIGLVTSFSLLGLKAKKD.

The protein belongs to the antigen I/II family. Post-translationally, detected as a 185 kDa cell surface protein, but also as 2 proteins in S.mutans culture supernatants of about 150 kDa (antigen I) and 50 kDa (antigen II); antigen II is only seen after proteolysis. Antigen I and II have the same N-terminus but different C-termini.

It localises to the secreted. Its subcellular location is the cell wall. Functionally, surface protein antigen implicated in dental caries. This is Cell surface antigen I/II from Streptococcus mutans serotype c (strain ATCC 700610 / UA159).